Reading from the N-terminus, the 213-residue chain is MTSLRYWDISPALDPSTPTWPGDTPFQQEWAARLDEHCPVNVGRVTLSPHTGAHVDAPLHYRADGLAIGQVPLDVYMGPCRVLHCIGATPLVTPEHLAGQLDDLPPRVLLRTFERVPANWPEGFCAIAPTTVECLAERGVRLIGIDTPSLDPQHSKTLDAHHAVGRHGMAILEGVVLDEVPAGDYELLALPLKFTHLDASPVRAVLRSLPTAE.

A substrate-binding site is contributed by Trp20. Zn(2+) is bound by residues His50, His54, and Asp56. The Proton donor/acceptor role is filled by His60. Residues His161 and Glu173 each coordinate Zn(2+).

It belongs to the Cyclase 1 superfamily. KynB family. In terms of assembly, homodimer. It depends on Zn(2+) as a cofactor.

The catalysed reaction is N-formyl-L-kynurenine + H2O = L-kynurenine + formate + H(+). The protein operates within amino-acid degradation; L-tryptophan degradation via kynurenine pathway; L-kynurenine from L-tryptophan: step 2/2. Its function is as follows. Catalyzes the hydrolysis of N-formyl-L-kynurenine to L-kynurenine, the second step in the kynurenine pathway of tryptophan degradation. This is Kynurenine formamidase from Pseudomonas paraeruginosa (strain DSM 24068 / PA7) (Pseudomonas aeruginosa (strain PA7)).